A 1408-amino-acid chain; its full sequence is ABC multidrug transporter MDR1 (1408 aa).

Positions 1 to 13 (MSASPSPIGAAAG) are enriched in low complexity. Residues 1 to 103 (MSASPSPIGA…SISSAVPKSH (103 aa)) are disordered. Residues 17-38 (LQARRDEEVVDSEKDALAHDSH) are compositionally biased toward basic and acidic residues. Helical transmembrane passes span 147 to 167 (FAAP…IAAG) and 223 to 243 (LYLM…MFIW). The ABC transmembrane type-1 1 domain maps to 157-464 (VFGLLLAIAA…LAPELAAVTK (308 aa)). Residue N244 is glycosylated (N-linked (GlcNAc...) asparagine). Helical transmembrane passes span 296–316 (KVAL…LAFV), 321–341 (LAGA…IMMT), 408–428 (IMFF…GILV), and 436–456 (GIVI…AMLA). In terms of domain architecture, ABC transporter 1 spans 499–744 (ISFENVRFHY…ENGPYAQLVN (246 aa)). 534-541 (GASGSGKS) provides a ligand contact to ATP. The next 2 helical transmembrane spans lie at 838-858 (IFAF…AILF) and 882-902 (LWYF…SAGF). One can recognise an ABC transmembrane type-1 2 domain in the interval 838 to 1125 (IFAFIAAICA…VFTFVPDASK (288 aa)). N-linked (GlcNAc...) asparagine glycosylation occurs at N934. 4 helical membrane passes run 952–972 (GLFG…IGGC), 973–993 (IIGL…IPIL), 1072–1092 (GLTF…IIDG), and 1099–1119 (FYTV…VFTF). N-linked (GlcNAc...) asparagine glycosylation is found at N1127 and N1182. The 241-residue stretch at 1162 to 1402 (VRIEGVHFRY…KGGYYDLVQM (241 aa)) folds into the ABC transporter 2 domain. 1197-1204 (GPSGCGKS) is an ATP binding site. Residue N1404 is glycosylated (N-linked (GlcNAc...) asparagine).

Belongs to the ABC transporter superfamily. ABCB family. Multidrug resistance exporter (TC 3.A.1.201) subfamily.

The protein localises to the cell membrane. It carries out the reaction itraconazole(in) + ATP + H2O = itraconazole(out) + ADP + phosphate + H(+). It catalyses the reaction voriconazole(in) + ATP + H2O = voriconazole(out) + ADP + phosphate + H(+). The enzyme catalyses fluconazole(in) + ATP + H2O = fluconazole(out) + ADP + phosphate + H(+). Pleiotropic ABC efflux transporter that confers resistance to structurally and functionally unrelated compounds including azoles such as fluconazole (FLC), itraconazole (ITC), posaconazole (POS), nocodazole and voriconazole (VRC). In Cryptococcus deuterogattii (strain R265) (Cryptococcus gattii VGII (strain R265)), this protein is ABC multidrug transporter MDR1.